The following is a 217-amino-acid chain: Probable GTP-binding protein EngB (217 aa).

The EngB-type G domain occupies 37–214 (AGVEVAFAGR…RAAMARLIGE (178 aa)). Residues 45–52 (GRSNVGKS), 72–76 (GRTQE), 92–95 (DMPG), 159–162 (TKAD), and 193–195 (TSS) each bind GTP. Residues serine 52 and threonine 74 each coordinate Mg(2+).

Belongs to the TRAFAC class TrmE-Era-EngA-EngB-Septin-like GTPase superfamily. EngB GTPase family. Mg(2+) is required as a cofactor.

Functionally, necessary for normal cell division and for the maintenance of normal septation. The chain is Probable GTP-binding protein EngB from Nitrobacter hamburgensis (strain DSM 10229 / NCIMB 13809 / X14).